The chain runs to 476 residues: MHFSSYQDLRSSLLAGQTTCEEVTKSYLERIDRHCDDNIFLAVFHEQALSRARSLDRRFSEGGTPGLLFGMPMAIKDNISIKGARLTCASRILENYESVYDATVIERLLNEDAVFIGKTNMDEFAMGSSNENSAFGPVANPFDKTRVPGGSSGGSAAAVAAGLALVALGSDTGGSVRQPAGFCDIVGLKPTYGRISRYGLVAFASSFDQIGVLARNSDDAALVLGVMAGADERDATSSRHAVSNYAEEMAAVSPDGLKIGVPKEFFHESLNPDVARLVKAKLEELREKGAELVDITLPASDYAIAAYYILVTAEASSNLARFDGARYGYRSPNCDNLSAMYVNSRTEGFGKEVKRRIMLGTYVLSAGYYDTYYKKAQQVRRVFQDRYREALEKVDVIAGPTSPFPPFGIGDKMDDPLEMYLADVFTVPASIVGMPAISVPIGYDSLNLPVGMHLICNFFEEGKLLGIAGLMQHSIV.

Catalysis depends on charge relay system residues lysine 76 and serine 151. Serine 175 serves as the catalytic Acyl-ester intermediate.

The protein belongs to the amidase family. GatA subfamily. Heterotrimer of A, B and C subunits.

The catalysed reaction is L-glutamyl-tRNA(Gln) + L-glutamine + ATP + H2O = L-glutaminyl-tRNA(Gln) + L-glutamate + ADP + phosphate + H(+). Allows the formation of correctly charged Gln-tRNA(Gln) through the transamidation of misacylated Glu-tRNA(Gln) in organisms which lack glutaminyl-tRNA synthetase. The reaction takes place in the presence of glutamine and ATP through an activated gamma-phospho-Glu-tRNA(Gln). This Chlorobium phaeobacteroides (strain DSM 266 / SMG 266 / 2430) protein is Glutamyl-tRNA(Gln) amidotransferase subunit A.